The primary structure comprises 273 residues: MLSRRGHRLSRFRKNKRRLRERLRQRIFFRDKVVPEAMEKPRVLVLTGAGISAESGIRTFRAADGLWEEHRVEDVATPEGFDRDPELVQAFYNARRRQLQQPEIQPNAAHLALAKLQDALGDRFLLVTQNIDNLHERAGNTNVIHMHGELLKVRCSQSGQVLDWTGDVTPEDKCHCCQFPAPLRPHVVWFGEMPLGMDEIYMALSMADIFIAIGTSGHVYPAAGFVHEAKLHGAHTVELNLEPSQVGNEFAEKYYGPASQVVPEFVEKLLKGL.

One can recognise a Deacetylase sirtuin-type domain in the interval 20 to 272 (RERLRQRIFF…PEFVEKLLKG (253 aa)). 48–67 (GAGISAESGIRTFRAADGLW) contributes to the NAD(+) binding site. Residues Tyr92 and Arg95 each contribute to the substrate site. 129–132 (QNID) serves as a coordination point for NAD(+). The active-site Proton acceptor is the His147. Residues Cys155 and Cys174 each contribute to the Zn(2+) site. Residues 214-216 (GTS), 240-242 (NLE), and Ala258 each bind NAD(+).

This sequence belongs to the sirtuin family. Class III subfamily. Requires Zn(2+) as cofactor.

It is found in the cytoplasm. The catalysed reaction is N(6)-acetyl-L-lysyl-[protein] + NAD(+) + H2O = 2''-O-acetyl-ADP-D-ribose + nicotinamide + L-lysyl-[protein]. It catalyses the reaction N(6)-succinyl-L-lysyl-[protein] + NAD(+) + H2O = 2''-O-succinyl-ADP-D-ribose + nicotinamide + L-lysyl-[protein]. The enzyme catalyses N(6)-(2-hydroxyisobutanoyl)-L-lysyl-[protein] + NAD(+) + H2O = 2''-O-(2-hydroxyisobutanoyl)-ADP-D-ribose + nicotinamide + L-lysyl-[protein]. NAD-dependent lysine deacetylase that specifically removes acetyl groups on target proteins. Also acts as a protein-lysine deacylase by mediating protein desuccinylation and de-2-hydroxyisobutyrylation. Modulates the activities of several proteins which are inactive in their acylated form. This Escherichia coli O157:H7 protein is NAD-dependent protein deacylase.